The sequence spans 274 residues: Rhamnulose-1-phosphate aldolase (274 aa).

The active site involves E117. H141, H143, and H212 together coordinate Zn(2+).

It belongs to the aldolase class II family. RhaD subfamily. As to quaternary structure, homotetramer. The cofactor is Zn(2+).

The protein localises to the cytoplasm. The enzyme catalyses L-rhamnulose 1-phosphate = (S)-lactaldehyde + dihydroxyacetone phosphate. Its pathway is carbohydrate degradation; L-rhamnose degradation; glycerone phosphate from L-rhamnose: step 3/3. Functionally, catalyzes the reversible cleavage of L-rhamnulose-1-phosphate to dihydroxyacetone phosphate (DHAP) and L-lactaldehyde. The sequence is that of Rhamnulose-1-phosphate aldolase from Shigella boydii serotype 4 (strain Sb227).